We begin with the raw amino-acid sequence, 33 residues long: Natriuretic peptide NP2 (33 aa).

C10 and C26 are disulfide-bonded.

Expressed by the venom gland.

The protein resides in the secreted. Snake venom natriuretic peptide that shows an increase in perfusion pressure, urinary flow and glomerular filtration rate. Reduces total and proximal tubular transport of sodium. In the aortic ring assay, causes a relaxant effect in endothelium-intact thoracic aortic rings precontracted with phenylephrine in the presence and absence of isatin, a natriuretic receptor antagonist. This is Natriuretic peptide NP2 from Crotalus durissus cascavella (Northeastern Brazilian rattlesnake).